The following is a 315-amino-acid chain: Ribosomal RNA small subunit methyltransferase H (315 aa).

Residues 35–37, Asp55, Phe80, Asp102, and Gln109 contribute to the S-adenosyl-L-methionine site; that span reads GGH.

It belongs to the methyltransferase superfamily. RsmH family.

The protein localises to the cytoplasm. The enzyme catalyses cytidine(1402) in 16S rRNA + S-adenosyl-L-methionine = N(4)-methylcytidine(1402) in 16S rRNA + S-adenosyl-L-homocysteine + H(+). Its function is as follows. Specifically methylates the N4 position of cytidine in position 1402 (C1402) of 16S rRNA. This is Ribosomal RNA small subunit methyltransferase H from Shewanella halifaxensis (strain HAW-EB4).